Consider the following 439-residue polypeptide: Homeobox protein ceh-32 (439 aa).

The segment at residues 183–243 is a DNA-binding region (homeobox); sequence WDGEQKTHCF…KNRRQRDRAA (61 aa). 3 disordered regions span residues 253–293, 344–365, and 379–439; these read GVEL…SHIP, EEEN…KKRS, and VSPS…SQSE. 2 stretches are compositionally biased toward acidic residues: residues 264–274 and 344–358; these read SDSDDDFEDSM and EEEN…EADI. Residues 379 to 392 are compositionally biased toward polar residues; the sequence is VSPSQCSPCSNESL. The span at 398-428 shows a compositional bias: basic and acidic residues; that stretch reads VKTEEVKKEDDEAAEEDSRSVKSETSEDPKH.

This sequence belongs to the SIX/Sine oculis homeobox family. As to quaternary structure, interacts with gmn-1. Expressed in the posterior gonad. Expressed in some cells in the head that are probably neurons. Expressed in the dorsal and ventral neuron RMD pair and the inner labial neuron class IL1. Not expressed in BAG neurons.

The protein localises to the nucleus. In terms of biological role, transcription factor which binds a motif with the core sequence 5'-GTATCA-3'. Plays a role in head morphogenesis. Involved in embryonic development. Required for cell specification of the RIA interneurons. May cooperate with the transcription factor vab-3 and phosphatase eya-1 to repress transcription factor ets-5 expression in non BAG neuronal cells. In Caenorhabditis elegans, this protein is Homeobox protein ceh-32.